We begin with the raw amino-acid sequence, 540 residues long: Chaperonin GroEL 1 (540 aa).

Residues 29 to 32, 86 to 90, Gly413, 477 to 479, and Asp493 each bind ATP; these read TLGP, DGTTT, and NAA.

Belongs to the chaperonin (HSP60) family. As to quaternary structure, forms a cylinder of 14 subunits composed of two heptameric rings stacked back-to-back. Interacts with the co-chaperonin GroES.

The protein localises to the cytoplasm. It carries out the reaction ATP + H2O + a folded polypeptide = ADP + phosphate + an unfolded polypeptide.. In terms of biological role, together with its co-chaperonin GroES, plays an essential role in assisting protein folding. The GroEL-GroES system forms a nano-cage that allows encapsulation of the non-native substrate proteins and provides a physical environment optimized to promote and accelerate protein folding. In Salinispora arenicola (strain CNS-205), this protein is Chaperonin GroEL 1.